The primary structure comprises 319 residues: Malate dehydrogenase (319 aa).

NAD(+)-binding positions include 10 to 15 and aspartate 34; that span reads GAGNIG. Positions 83 and 89 each coordinate substrate. Residues asparagine 96 and 119–121 contribute to the NAD(+) site; that span reads ITN. Substrate is bound by residues asparagine 121 and arginine 152. Residue histidine 176 is the Proton acceptor of the active site.

The protein belongs to the LDH/MDH superfamily. MDH type 3 family.

The catalysed reaction is (S)-malate + NAD(+) = oxaloacetate + NADH + H(+). Catalyzes the reversible oxidation of malate to oxaloacetate. The polypeptide is Malate dehydrogenase (Francisella novicida).